We begin with the raw amino-acid sequence, 281 residues long: NADPH-dependent 7-cyano-7-deazaguanine reductase (281 aa).

Substrate is bound at residue 88–90 (IES). 90–91 (SK) serves as a coordination point for NADPH. Cys189 functions as the Thioimide intermediate in the catalytic mechanism. Asp196 (proton donor) is an active-site residue. 228–229 (HE) is a binding site for substrate. 257–258 (RG) lines the NADPH pocket.

Belongs to the GTP cyclohydrolase I family. QueF type 2 subfamily. Homodimer.

It localises to the cytoplasm. The catalysed reaction is 7-aminomethyl-7-carbaguanine + 2 NADP(+) = 7-cyano-7-deazaguanine + 2 NADPH + 3 H(+). It functions in the pathway tRNA modification; tRNA-queuosine biosynthesis. Catalyzes the NADPH-dependent reduction of 7-cyano-7-deazaguanine (preQ0) to 7-aminomethyl-7-deazaguanine (preQ1). The sequence is that of NADPH-dependent 7-cyano-7-deazaguanine reductase from Yersinia pseudotuberculosis serotype O:1b (strain IP 31758).